The sequence spans 252 residues: tRNA pseudouridine synthase A (252 aa).

Aspartate 52 serves as the catalytic Nucleophile. Tyrosine 112 is a substrate binding site.

It belongs to the tRNA pseudouridine synthase TruA family. As to quaternary structure, homodimer.

It catalyses the reaction uridine(38/39/40) in tRNA = pseudouridine(38/39/40) in tRNA. Formation of pseudouridine at positions 38, 39 and 40 in the anticodon stem and loop of transfer RNAs. The protein is tRNA pseudouridine synthase A of Porphyromonas gingivalis (strain ATCC 33277 / DSM 20709 / CIP 103683 / JCM 12257 / NCTC 11834 / 2561).